Consider the following 363-residue polypeptide: Phosphoserine aminotransferase (363 aa).

An L-glutamate-binding site is contributed by R41. Residues 75–76 (AS), W100, T155, D175, and Q198 contribute to the pyridoxal 5'-phosphate site. An N6-(pyridoxal phosphate)lysine modification is found at K199. Position 239–240 (239–240 (NT)) interacts with pyridoxal 5'-phosphate.

This sequence belongs to the class-V pyridoxal-phosphate-dependent aminotransferase family. SerC subfamily. As to quaternary structure, homodimer. Pyridoxal 5'-phosphate serves as cofactor.

Its subcellular location is the cytoplasm. It carries out the reaction O-phospho-L-serine + 2-oxoglutarate = 3-phosphooxypyruvate + L-glutamate. The enzyme catalyses 4-(phosphooxy)-L-threonine + 2-oxoglutarate = (R)-3-hydroxy-2-oxo-4-phosphooxybutanoate + L-glutamate. The protein operates within amino-acid biosynthesis; L-serine biosynthesis; L-serine from 3-phospho-D-glycerate: step 2/3. Its function is as follows. Catalyzes the reversible conversion of 3-phosphohydroxypyruvate to phosphoserine and of 3-hydroxy-2-oxo-4-phosphonooxybutanoate to phosphohydroxythreonine. The sequence is that of Phosphoserine aminotransferase from Streptococcus suis (strain 98HAH33).